The primary structure comprises 114 residues: DNA-binding protein rrnAC3180 (114 aa).

The segment covering 1-11 (MSGDPSEEELE) has biased composition (acidic residues). Residues 1–45 (MSGDPSEEELEELRKKKMEQLKEQQGGEGEGQEAAQQQAEAQKQA) are disordered. Over residues 12 to 22 (ELRKKKMEQLK) the composition is skewed to basic and acidic residues. Residues 32 to 45 (QEAAQQQAEAQKQA) are compositionally biased toward low complexity.

This sequence belongs to the PDCD5 family.

The protein is DNA-binding protein rrnAC3180 of Haloarcula marismortui (strain ATCC 43049 / DSM 3752 / JCM 8966 / VKM B-1809) (Halobacterium marismortui).